Reading from the N-terminus, the 169-residue chain is MADENQTNNGEAAGAQAQQGAQFNIQRIYTKDISFESPNAPAIFTKEWKPEIKLDIDTSTNKLEENVFEVVLSVTVTATLGEETAFLCEVQQAGIFAIGEMPDQNKAHTLGSFCPNMLFPYARETISNLVNRGTFPPLNLAPVNFDAIFAAYVQKRAQQAQGEAPKMDA.

This sequence belongs to the SecB family. In terms of assembly, homotetramer, a dimer of dimers. One homotetramer interacts with 1 SecA dimer.

Its subcellular location is the cytoplasm. One of the proteins required for the normal export of preproteins out of the cell cytoplasm. It is a molecular chaperone that binds to a subset of precursor proteins, maintaining them in a translocation-competent state. It also specifically binds to its receptor SecA. This Alteromonas mediterranea (strain DSM 17117 / CIP 110805 / LMG 28347 / Deep ecotype) protein is Protein-export protein SecB.